The following is a 396-amino-acid chain: 1-deoxy-D-xylulose 5-phosphate reductoisomerase (396 aa).

T13, G14, S15, I16, and N127 together coordinate NADPH. Residue K128 coordinates 1-deoxy-D-xylulose 5-phosphate. Residue E129 coordinates NADPH. D153 serves as a coordination point for Mn(2+). Positions 154, 155, 184, and 207 each coordinate 1-deoxy-D-xylulose 5-phosphate. E155 lines the Mn(2+) pocket. G213 is an NADPH binding site. 1-deoxy-D-xylulose 5-phosphate-binding residues include S220, N225, K226, and E229. Mn(2+) is bound at residue E229.

It belongs to the DXR family. Requires Mg(2+) as cofactor. It depends on Mn(2+) as a cofactor.

The catalysed reaction is 2-C-methyl-D-erythritol 4-phosphate + NADP(+) = 1-deoxy-D-xylulose 5-phosphate + NADPH + H(+). It participates in isoprenoid biosynthesis; isopentenyl diphosphate biosynthesis via DXP pathway; isopentenyl diphosphate from 1-deoxy-D-xylulose 5-phosphate: step 1/6. In terms of biological role, catalyzes the NADPH-dependent rearrangement and reduction of 1-deoxy-D-xylulose-5-phosphate (DXP) to 2-C-methyl-D-erythritol 4-phosphate (MEP). In Pseudomonas savastanoi pv. phaseolicola (strain 1448A / Race 6) (Pseudomonas syringae pv. phaseolicola (strain 1448A / Race 6)), this protein is 1-deoxy-D-xylulose 5-phosphate reductoisomerase.